Consider the following 297-residue polypeptide: MRPLSFRRRTAQARPDPAPSRLSYRVQRLLLTPLFHALIRVGLPAFVLAFGVGWLLQNQELRDELVAQTIALRTQIEQRPEFMVNAMSVSGASTELIEDIHEVVPIDFPVSSFALDLEAMDRIIGELDAVAEVDLSIQAAGILAIEIVERTPAVVWQTRQTLEILDAEGHRVGPIESRAAHAALPLVAGPGGNRAVAEALRLLEVAEELAPRIIGLQRMGERRWDVVLTEGQRILLPEREAELALARVIELDQAEDLFARDISVVDMRLPDRPTVRLNPDALDALWTIRGLTNDRIE.

Over 1–33 (MRPLSFRRRTAQARPDPAPSRLSYRVQRLLLTP) the chain is Cytoplasmic. The chain crosses the membrane as a helical span at residues 34–54 (LFHALIRVGLPAFVLAFGVGW). Over 55-297 (LLQNQELRDE…IRGLTNDRIE (243 aa)) the chain is Periplasmic. The 69-residue stretch at 82-150 (FMVNAMSVSG…GILAIEIVER (69 aa)) folds into the POTRA domain.

Belongs to the FtsQ/DivIB family. FtsQ subfamily.

It is found in the cell inner membrane. In terms of biological role, essential cell division protein. This is Cell division protein FtsQ from Dinoroseobacter shibae (strain DSM 16493 / NCIMB 14021 / DFL 12).